Consider the following 333-residue polypeptide: ADP-L-glycero-D-manno-heptose-6-epimerase (333 aa).

NADP(+) is bound by residues 11–12, 32–33, Lys-39, Lys-54, 76–80, and Asn-93; these read FI, DN, and QGACS. Tyr-140 serves as the catalytic Proton acceptor. Lys-144 serves as a coordination point for NADP(+). Asn-170 lines the substrate pocket. 2 residues coordinate NADP(+): Val-171 and Lys-179. The active-site Proton acceptor is the Lys-179. Residues Arg-181, His-188, 202-205, Arg-215, and Tyr-294 each bind substrate; that span reads FGGW.

The protein belongs to the NAD(P)-dependent epimerase/dehydratase family. HldD subfamily. In terms of assembly, homopentamer. It depends on NADP(+) as a cofactor.

It carries out the reaction ADP-D-glycero-beta-D-manno-heptose = ADP-L-glycero-beta-D-manno-heptose. Its pathway is nucleotide-sugar biosynthesis; ADP-L-glycero-beta-D-manno-heptose biosynthesis; ADP-L-glycero-beta-D-manno-heptose from D-glycero-beta-D-manno-heptose 7-phosphate: step 4/4. It participates in bacterial outer membrane biogenesis; LPS core biosynthesis. Catalyzes the interconversion between ADP-D-glycero-beta-D-manno-heptose and ADP-L-glycero-beta-D-manno-heptose via an epimerization at carbon 6 of the heptose. This Chromobacterium violaceum (strain ATCC 12472 / DSM 30191 / JCM 1249 / CCUG 213 / NBRC 12614 / NCIMB 9131 / NCTC 9757 / MK) protein is ADP-L-glycero-D-manno-heptose-6-epimerase.